Consider the following 734-residue polypeptide: Photosystem I P700 chlorophyll a apoprotein A2 (734 aa).

Helical transmembrane passes span 46-69 (IFAS…FHVA), 135-158 (LYTG…LHLQ), 175-199 (LNHH…HVAI), 273-291 (MAHH…GHMY), 330-353 (IHFQ…QHMY), 369-395 (AALY…IFFI), 417-439 (AIIS…LYVH), and 517-535 (FLVH…LILV). [4Fe-4S] cluster is bound by residues cysteine 559 and cysteine 568. Helical transmembrane passes span 575 to 596 (AFYL…YWHW) and 643 to 665 (LSVW…MFLI). Residues histidine 654, methionine 662, and tyrosine 670 each contribute to the chlorophyll a site. Position 671 (tryptophan 671) interacts with phylloquinone. Residues 707–727 (LVGLAHFSVGYIFTYAAFLIA) traverse the membrane as a helical segment.

This sequence belongs to the PsaA/PsaB family. The PsaA/B heterodimer binds the P700 chlorophyll special pair and subsequent electron acceptors. PSI consists of a core antenna complex that captures photons, and an electron transfer chain that converts photonic excitation into a charge separation. The eukaryotic PSI reaction center is composed of at least 11 subunits. P700 is a chlorophyll a/chlorophyll a' dimer, A0 is one or more chlorophyll a, A1 is one or both phylloquinones and FX is a shared 4Fe-4S iron-sulfur center. serves as cofactor.

It localises to the plastid. It is found in the chloroplast thylakoid membrane. It carries out the reaction reduced [plastocyanin] + hnu + oxidized [2Fe-2S]-[ferredoxin] = oxidized [plastocyanin] + reduced [2Fe-2S]-[ferredoxin]. PsaA and PsaB bind P700, the primary electron donor of photosystem I (PSI), as well as the electron acceptors A0, A1 and FX. PSI is a plastocyanin-ferredoxin oxidoreductase, converting photonic excitation into a charge separation, which transfers an electron from the donor P700 chlorophyll pair to the spectroscopically characterized acceptors A0, A1, FX, FA and FB in turn. Oxidized P700 is reduced on the lumenal side of the thylakoid membrane by plastocyanin. This is Photosystem I P700 chlorophyll a apoprotein A2 from Crucihimalaya wallichii (Rock-cress).